We begin with the raw amino-acid sequence, 197 residues long: dCTP deaminase, dUMP-forming (197 aa).

DCTP contacts are provided by residues 105 to 110 (RSSMGR), aspartate 123, 131 to 133 (TLE), glutamine 152, tyrosine 166, lysine 174, and glutamine 178. The active-site Proton donor/acceptor is the glutamate 133.

This sequence belongs to the dCTP deaminase family. Homotrimer.

The catalysed reaction is dCTP + 2 H2O = dUMP + NH4(+) + diphosphate. It functions in the pathway pyrimidine metabolism; dUMP biosynthesis; dUMP from dCTP: step 1/1. Its function is as follows. Bifunctional enzyme that catalyzes both the deamination of dCTP to dUTP and the hydrolysis of dUTP to dUMP without releasing the toxic dUTP intermediate. This Methanosphaera stadtmanae (strain ATCC 43021 / DSM 3091 / JCM 11832 / MCB-3) protein is dCTP deaminase, dUMP-forming.